Here is a 357-residue protein sequence, read N- to C-terminus: Phosphoserine aminotransferase (357 aa).

An L-glutamate-binding site is contributed by Arg-41. Pyridoxal 5'-phosphate is bound by residues 75-76 (GT), Trp-100, Thr-150, Asp-170, and Gln-193. The residue at position 194 (Lys-194) is an N6-(pyridoxal phosphate)lysine. Residue 234–235 (NT) coordinates pyridoxal 5'-phosphate.

This sequence belongs to the class-V pyridoxal-phosphate-dependent aminotransferase family. SerC subfamily. In terms of assembly, homodimer. Pyridoxal 5'-phosphate is required as a cofactor.

It localises to the cytoplasm. The enzyme catalyses O-phospho-L-serine + 2-oxoglutarate = 3-phosphooxypyruvate + L-glutamate. It catalyses the reaction 4-(phosphooxy)-L-threonine + 2-oxoglutarate = (R)-3-hydroxy-2-oxo-4-phosphooxybutanoate + L-glutamate. It participates in amino-acid biosynthesis; L-serine biosynthesis; L-serine from 3-phospho-D-glycerate: step 2/3. In terms of biological role, catalyzes the reversible conversion of 3-phosphohydroxypyruvate to phosphoserine and of 3-hydroxy-2-oxo-4-phosphonooxybutanoate to phosphohydroxythreonine. The protein is Phosphoserine aminotransferase of Lactiplantibacillus plantarum (strain ATCC BAA-793 / NCIMB 8826 / WCFS1) (Lactobacillus plantarum).